Reading from the N-terminus, the 206-residue chain is Max dimerization protein 3 (206 aa).

Residues 8-25 form an interaction with SIN3A and SIN3B region; the sequence is IQVLLQAAEFLERREREA. 2 disordered regions span residues 25-67 and 146-171; these read AEHG…ELEK and RERLRADSLDSSGLSSERSDSDQEEL. In terms of domain architecture, bHLH spans 57–109; the sequence is SGRSVHNELEKRRRAQLKRCLERLKQQMPLGADCARYTTLSLLRRARMHIQKL.

As to quaternary structure, efficient DNA binding requires dimerization with another bHLH protein. Binds DNA as a heterodimer with MAX. Interacts with SIN3A AND SIN3B. Interacts with RNF17.

It is found in the nucleus. Functionally, transcriptional repressor. Binds with MAX to form a sequence-specific DNA-binding protein complex which recognizes the core sequence 5'-CAC[GA]TG-3'. Antagonizes MYC transcriptional activity by competing for MAX and suppresses MYC dependent cell transformation. The sequence is that of Max dimerization protein 3 (MXD3) from Homo sapiens (Human).